The primary structure comprises 188 residues: Probable DNA-directed RNA polymerase subunit delta (188 aa).

The HTH HARE-type domain maps to 14-83 (LSMIEVARAI…GENKWGLRSW (70 aa)). Residues 119 to 188 (EDAIDYSADD…EDEEDEDEEE (70 aa)) form a disordered region.

The protein belongs to the RpoE family. In terms of assembly, RNAP is composed of a core of 2 alpha, a beta and a beta' subunits. The core is associated with a delta subunit and one of several sigma factors.

Participates in both the initiation and recycling phases of transcription. In the presence of the delta subunit, RNAP displays an increased specificity of transcription, a decreased affinity for nucleic acids, and an increased efficiency of RNA synthesis because of enhanced recycling. This is Probable DNA-directed RNA polymerase subunit delta from Streptococcus equi subsp. zooepidemicus (strain H70).